The following is a 355-amino-acid chain: MSCLLIAASGTGGHLFPALAVAEALPESWKVSWLGVSDRLESSLIPKKYQLSTIGVEGVQSRGIKRIVQIFKLLAATGSVICLIRRNRIQIVLTTGGYIAVPAVLAAKLTGKKVILHESNAIPGKATRLLGRLCDKVALGWPPAKKKLPGCKVTVTGTPVRKSFLMKNKLPSWAPSGPGPLIVVIGGSQGAVGLNDMVRAVLPFLLDQGCRIVHITGKNAQSKIIHTNLVEQPFSDDIPGLLQNADLVISRSGAGALSEFAVCEVPAILVPYPYAADNHQECNAIYASQFGAALIVHQHEPEGKALRNALERLLKKNLSQADTVENLLNLMRKGMAKMAVRDAHIHLMSLLKEAS.

Residues 11-13 (TGG), Asn120, Arg161, Ser188, and Gln280 each bind UDP-N-acetyl-alpha-D-glucosamine.

It belongs to the glycosyltransferase 28 family. MurG subfamily.

Its subcellular location is the cell inner membrane. It catalyses the reaction di-trans,octa-cis-undecaprenyl diphospho-N-acetyl-alpha-D-muramoyl-L-alanyl-D-glutamyl-meso-2,6-diaminopimeloyl-D-alanyl-D-alanine + UDP-N-acetyl-alpha-D-glucosamine = di-trans,octa-cis-undecaprenyl diphospho-[N-acetyl-alpha-D-glucosaminyl-(1-&gt;4)]-N-acetyl-alpha-D-muramoyl-L-alanyl-D-glutamyl-meso-2,6-diaminopimeloyl-D-alanyl-D-alanine + UDP + H(+). It participates in cell wall biogenesis; peptidoglycan biosynthesis. In terms of biological role, cell wall formation. Catalyzes the transfer of a GlcNAc subunit on undecaprenyl-pyrophosphoryl-MurNAc-pentapeptide (lipid intermediate I) to form undecaprenyl-pyrophosphoryl-MurNAc-(pentapeptide)GlcNAc (lipid intermediate II). The sequence is that of UDP-N-acetylglucosamine--N-acetylmuramyl-(pentapeptide) pyrophosphoryl-undecaprenol N-acetylglucosamine transferase from Prochlorococcus marinus (strain MIT 9211).